The chain runs to 568 residues: DNA ligase 2 (568 aa).

Residue E254 coordinates ATP. K256 functions as the N6-AMP-lysine intermediate in the catalytic mechanism. Residues R261, R276, E306, F346, R425, and K431 each coordinate ATP.

This sequence belongs to the ATP-dependent DNA ligase family. Mg(2+) serves as cofactor.

The catalysed reaction is ATP + (deoxyribonucleotide)n-3'-hydroxyl + 5'-phospho-(deoxyribonucleotide)m = (deoxyribonucleotide)n+m + AMP + diphosphate.. Functionally, DNA ligase that seals nicks in double-stranded DNA during DNA replication, DNA recombination and DNA repair. This is DNA ligase 2 from Methanosarcina acetivorans (strain ATCC 35395 / DSM 2834 / JCM 12185 / C2A).